The following is a 230-amino-acid chain: 5'-methylthioadenosine/S-adenosylhomocysteine nucleosidase (230 aa).

Glu-12 acts as the Proton acceptor in catalysis. Substrate is bound by residues Gly-78, Met-153, and 174 to 175 (ME). Asp-198 serves as the catalytic Proton donor.

The protein belongs to the PNP/UDP phosphorylase family. MtnN subfamily.

It catalyses the reaction S-adenosyl-L-homocysteine + H2O = S-(5-deoxy-D-ribos-5-yl)-L-homocysteine + adenine. The catalysed reaction is S-methyl-5'-thioadenosine + H2O = 5-(methylsulfanyl)-D-ribose + adenine. It carries out the reaction 5'-deoxyadenosine + H2O = 5-deoxy-D-ribose + adenine. It functions in the pathway amino-acid biosynthesis; L-methionine biosynthesis via salvage pathway; S-methyl-5-thio-alpha-D-ribose 1-phosphate from S-methyl-5'-thioadenosine (hydrolase route): step 1/2. In terms of biological role, catalyzes the irreversible cleavage of the glycosidic bond in both 5'-methylthioadenosine (MTA) and S-adenosylhomocysteine (SAH/AdoHcy) to adenine and the corresponding thioribose, 5'-methylthioribose and S-ribosylhomocysteine, respectively. Also cleaves 5'-deoxyadenosine, a toxic by-product of radical S-adenosylmethionine (SAM) enzymes, into 5-deoxyribose and adenine. This chain is 5'-methylthioadenosine/S-adenosylhomocysteine nucleosidase, found in Lysinibacillus sphaericus (strain C3-41).